The sequence spans 273 residues: Zinc finger protein 32 (273 aa).

3 C2H2-type zinc fingers span residues tyrosine 77 to histidine 99, phenylalanine 105 to histidine 127, and tyrosine 133 to histidine 155. The Zn(2+) site is built by cysteine 79, cysteine 82, histidine 95, histidine 99, cysteine 107, cysteine 110, histidine 123, histidine 127, serine 141, glutamine 144, glycine 157, tyrosine 161, phenylalanine 198, lysine 201, leucine 214, alanine 218, cysteine 247, cysteine 250, histidine 263, and cysteine 267. 2 C2H2-type zinc fingers span residues tyrosine 161–histidine 183 and tyrosine 189–histidine 211. Residues tyrosine 217–histidine 239 form a C2H2-type 6 zinc finger. The segment at tyrosine 245 to cysteine 267 adopts a CCHC-type zinc-finger fold.

Belongs to the krueppel C2H2-type zinc-finger protein family.

The protein resides in the nucleus. Its function is as follows. May be involved in transcriptional regulation. The polypeptide is Zinc finger protein 32 (ZNF32) (Homo sapiens (Human)).